The primary structure comprises 483 residues: ATP synthase subunit beta (483 aa).

An ATP-binding site is contributed by glycine 169–threonine 176.

This sequence belongs to the ATPase alpha/beta chains family. In terms of assembly, F-type ATPases have 2 components, CF(1) - the catalytic core - and CF(0) - the membrane proton channel. CF(1) has five subunits: alpha(3), beta(3), gamma(1), delta(1), epsilon(1). CF(0) has three main subunits: a(1), b(2) and c(9-12). The alpha and beta chains form an alternating ring which encloses part of the gamma chain. CF(1) is attached to CF(0) by a central stalk formed by the gamma and epsilon chains, while a peripheral stalk is formed by the delta and b chains.

The protein resides in the cell membrane. It catalyses the reaction ATP + H2O + 4 H(+)(in) = ADP + phosphate + 5 H(+)(out). Produces ATP from ADP in the presence of a proton gradient across the membrane. The catalytic sites are hosted primarily by the beta subunits. The chain is ATP synthase subunit beta from Rhodococcus opacus (strain B4).